A 308-amino-acid polypeptide reads, in one-letter code: UDP-N-acetylenolpyruvoylglucosamine reductase (308 aa).

The FAD-binding PCMH-type domain occupies 32 to 196 (VGGPAARLYK…ISAKLQLSPG (165 aa)). Arg176 is an active-site residue. Residue Ser225 is the Proton donor of the active site. Glu296 is a catalytic residue.

The protein belongs to the MurB family. FAD serves as cofactor.

It localises to the cytoplasm. The enzyme catalyses UDP-N-acetyl-alpha-D-muramate + NADP(+) = UDP-N-acetyl-3-O-(1-carboxyvinyl)-alpha-D-glucosamine + NADPH + H(+). It participates in cell wall biogenesis; peptidoglycan biosynthesis. In terms of biological role, cell wall formation. The sequence is that of UDP-N-acetylenolpyruvoylglucosamine reductase from Legionella pneumophila (strain Corby).